We begin with the raw amino-acid sequence, 156 residues long: Small ribosomal subunit protein uS7 (156 aa).

The protein belongs to the universal ribosomal protein uS7 family. In terms of assembly, part of the 30S ribosomal subunit. Contacts proteins S9 and S11.

Its function is as follows. One of the primary rRNA binding proteins, it binds directly to 16S rRNA where it nucleates assembly of the head domain of the 30S subunit. Is located at the subunit interface close to the decoding center, probably blocks exit of the E-site tRNA. The chain is Small ribosomal subunit protein uS7 from Dehalococcoides mccartyi (strain ATCC BAA-2266 / KCTC 15142 / 195) (Dehalococcoides ethenogenes (strain 195)).